Here is a 148-residue protein sequence, read N- to C-terminus: Large ribosomal subunit protein bL9 (148 aa).

It belongs to the bacterial ribosomal protein bL9 family.

In terms of biological role, binds to the 23S rRNA. This is Large ribosomal subunit protein bL9 from Lysinibacillus sphaericus (strain C3-41).